A 246-amino-acid polypeptide reads, in one-letter code: Pyridoxine 5'-phosphate synthase (246 aa).

Residue Asn-7 participates in 3-amino-2-oxopropyl phosphate binding. 9–10 (DH) lines the 1-deoxy-D-xylulose 5-phosphate pocket. Arg-18 is a 3-amino-2-oxopropyl phosphate binding site. His-43 acts as the Proton acceptor in catalysis. 1-deoxy-D-xylulose 5-phosphate is bound by residues Arg-45 and His-50. The Proton acceptor role is filled by Glu-70. A 1-deoxy-D-xylulose 5-phosphate-binding site is contributed by Thr-100. His-190 acts as the Proton donor in catalysis. 3-amino-2-oxopropyl phosphate is bound by residues Gly-191 and 212–213 (GH).

It belongs to the PNP synthase family. In terms of assembly, homooctamer; tetramer of dimers.

It localises to the cytoplasm. The catalysed reaction is 3-amino-2-oxopropyl phosphate + 1-deoxy-D-xylulose 5-phosphate = pyridoxine 5'-phosphate + phosphate + 2 H2O + H(+). It participates in cofactor biosynthesis; pyridoxine 5'-phosphate biosynthesis; pyridoxine 5'-phosphate from D-erythrose 4-phosphate: step 5/5. Functionally, catalyzes the complicated ring closure reaction between the two acyclic compounds 1-deoxy-D-xylulose-5-phosphate (DXP) and 3-amino-2-oxopropyl phosphate (1-amino-acetone-3-phosphate or AAP) to form pyridoxine 5'-phosphate (PNP) and inorganic phosphate. This is Pyridoxine 5'-phosphate synthase from Prochlorococcus marinus (strain SARG / CCMP1375 / SS120).